The primary structure comprises 308 residues: N-acetylmuramic acid 6-phosphate etherase (308 aa).

The region spanning 62–225 (TAARLRQGGR…STGVMVQLGK (164 aa)) is the SIS domain. Residue glutamate 90 is the Proton donor of the active site. The active site involves glutamate 121.

Belongs to the GCKR-like family. MurNAc-6-P etherase subfamily. In terms of assembly, homodimer.

It carries out the reaction N-acetyl-D-muramate 6-phosphate + H2O = N-acetyl-D-glucosamine 6-phosphate + (R)-lactate. It participates in amino-sugar metabolism; N-acetylmuramate degradation. Specifically catalyzes the cleavage of the D-lactyl ether substituent of MurNAc 6-phosphate, producing GlcNAc 6-phosphate and D-lactate. This is N-acetylmuramic acid 6-phosphate etherase from Thermosynechococcus vestitus (strain NIES-2133 / IAM M-273 / BP-1).